Reading from the N-terminus, the 297-residue chain is Magnetosome protein MamB (297 aa).

At 1 to 12 the chain is on the cytoplasmic side; the sequence is MKFENCRDCREE. The interval 1–214 is transmembrane domain (TMD); it reads MKFENCRDCR…GLMDSSVDTE (214 aa). The chain crosses the membrane as a helical span at residues 13-33; the sequence is VVWWAFTADICMTLFKGILGL. Residues 34–83 lie on the Lumenal side of the membrane; sequence MSGSVALVADSLHSGADVVASGVTQLSLKISNKPADERYPFGYGNIQYIS. A helical transmembrane segment spans residues 84–104; that stretch reads SAIVGSLLLIGASFLMYGSVV. Topologically, residues 105–112 are cytoplasmic; it reads KLISGTYE. The helical transmembrane segment at 113–133 threads the bilayer; sequence APSIFAALGASVTVIVNELMY. The Lumenal portion of the chain corresponds to 134–164; it reads RYQICVGNENNSPAIIANAWDNRSDAISSAA. Residues 165–185 form a helical membrane-spanning segment; the sequence is VMVGVIASVIGFPIADTIAAI. The Cytoplasmic portion of the chain corresponds to 186–297; the sequence is GVSALVGHIG…PAPAAVTVRV (112 aa). The interval 215 to 297 is C-terminal domain (CTD); the sequence is LLQTAWQIAT…PAPAAVTVRV (83 aa).

The protein belongs to the cation diffusion facilitator (CDF) transporter (TC 2.A.4) family. As to quaternary structure, forms homodimers via its C-terminal domain, may form higher order multimers that are sensitive to reducing agent. Probably interacts with MamE. Interacts with MamM via their C-terminal domains.

It localises to the cell inner membrane. The protein localises to the magnetosome membrane. In terms of biological role, plays a dual, essential role in magnetosome formation; required for magnetosome vesicle formation as well as biomineralization. Requires heterodimerization with MamM for stability. Probably binds and transports iron. One of 7 genes (mamLQBIEMO) able to induce magnetosome membrane biogenesis; coexpression of mamLQRBIEMO in a deletion of the 17 gene mamAB operon restores magnetosome vesicle formation but not magnetite biosynthesis. The polypeptide is Magnetosome protein MamB (Magnetospirillum gryphiswaldense (strain DSM 6361 / JCM 21280 / NBRC 15271 / MSR-1)).